We begin with the raw amino-acid sequence, 2085 residues long: Protein MLP1 homolog (2085 aa).

6 coiled-coil regions span residues 44–367, 399–513, 568–630, 675–1205, 1232–1667, and 1744–1799; these read KIRE…SHDG, KATQ…HVLI, YELQ…RMKS, ANEA…KRTQ, LRRE…LQQE, and EIEA…AAKE. Positions 365-398 are disordered; sequence HDGVPGSVPQTPRANGSLLARPSSPFGTPASLRG. Residues 934–953 are disordered; it reads AERLRPLPTPRAPAAAEQPS. The short motif at 1159–1166 is the Nuclear localization signal element; the sequence is ERRQRLEQ. Residues 1482 to 1503 show a composition bias toward polar residues; the sequence is LATATEKNTSLQQQLAASSTEQ. Disordered stretches follow at residues 1482-1514 and 1567-1591; these read LATATEKNTSLQQQLAASSTEQPAAAPVSAAPS and SGGDVATAETSVSAQPSAGLSDEER. Residues 1504–1514 show a composition bias toward low complexity; that stretch reads PAAAPVSAAPS. The span at 1574 to 1584 shows a compositional bias: polar residues; that stretch reads AETSVSAQPSA. Residues 1816-2085 form a disordered region; the sequence is KPPAPAQAPA…GGGGGGGGNQ (270 aa). Residues 1817 to 1827 are compositionally biased toward pro residues; the sequence is PPAPAQAPAPA. Low complexity-rich tracts occupy residues 1843 to 1858, 1910 to 1974, and 1982 to 1994; these read VAPATAAPAAPAQAPS, QAGQ…PVPA, and ARTARGLYQAGPR. Over residues 1995–2016 the composition is skewed to gly residues; the sequence is GARGGRGGGFVGAGRGAGGAAG. The span at 2028–2040 shows a compositional bias: low complexity; sequence GGATATAAAAAAA. Gly residues-rich tracts occupy residues 2041–2051 and 2076–2085; these read GGAGGSAGAGN and GGGGGGGGNQ.

The nuclear pore complex (NPC) constitutes the exclusive means of nucleocytoplasmic transport. NPCs allow the passive diffusion of ions and small molecules and the active, nuclear transport receptor-mediated bidirectional transport of macromolecules such as proteins, RNAs, ribonucleoparticles (RNPs), and ribosomal subunits across the nuclear envelope. The 55-60 MDa NPC is composed of at least 28 different subunits: AMO1, ELYS, GLE1, GLE2, MLP1, NDC1, NIC96, NSP1, NUP133, NUP145, NUP152, NUP159, NUP170, NUP188, NUP192, NUP37, NUP49, NUP53, NUP56, NUP57, NUP82, NUP84, NUP85, POM152, POM33, POM34, SEC13 and SEH1. Due to its 8-fold rotational symmetry, all subunits are present with 8 copies or multiples thereof.

It is found in the nucleus. Functionally, involved in the structural and functional organization of perinuclear chromatin. Associates with the nuclear pore complex and form filamentous structures along the nuclear periphery. The protein is Protein MLP1 homolog (MLP1) of Chaetomium thermophilum (strain DSM 1495 / CBS 144.50 / IMI 039719) (Thermochaetoides thermophila).